The following is a 241-amino-acid chain: Phosphoadenosine 5'-phosphosulfate reductase (241 aa).

Catalysis depends on Cys235, which acts as the Nucleophile; cysteine thiosulfonate intermediate.

Belongs to the PAPS reductase family. CysH subfamily.

The protein resides in the cytoplasm. The enzyme catalyses [thioredoxin]-disulfide + sulfite + adenosine 3',5'-bisphosphate + 2 H(+) = [thioredoxin]-dithiol + 3'-phosphoadenylyl sulfate. The protein operates within sulfur metabolism; hydrogen sulfide biosynthesis; sulfite from sulfate: step 3/3. Its function is as follows. Catalyzes the formation of sulfite from phosphoadenosine 5'-phosphosulfate (PAPS) using thioredoxin as an electron donor. This chain is Phosphoadenosine 5'-phosphosulfate reductase, found in Xanthomonas axonopodis pv. citri (strain 306).